Here is a 99-residue protein sequence, read N- to C-terminus: Small ribosomal subunit protein bS18 (99 aa).

It belongs to the bacterial ribosomal protein bS18 family. In terms of assembly, part of the 30S ribosomal subunit. Forms a tight heterodimer with protein bS6.

Functionally, binds as a heterodimer with protein bS6 to the central domain of the 16S rRNA, where it helps stabilize the platform of the 30S subunit. The protein is Small ribosomal subunit protein bS18 of Christiangramia forsetii (strain DSM 17595 / CGMCC 1.15422 / KT0803) (Gramella forsetii).